The primary structure comprises 430 residues: Enolase (430 aa).

Gln167 serves as a coordination point for (2R)-2-phosphoglycerate. Glu209 functions as the Proton donor in the catalytic mechanism. Mg(2+)-binding residues include Asp245, Glu286, and Asp313. Residues Lys338, Arg367, Ser368, and Lys389 each contribute to the (2R)-2-phosphoglycerate site. Lys338 acts as the Proton acceptor in catalysis.

It belongs to the enolase family. Requires Mg(2+) as cofactor.

The protein resides in the cytoplasm. It is found in the secreted. It localises to the cell surface. The catalysed reaction is (2R)-2-phosphoglycerate = phosphoenolpyruvate + H2O. The protein operates within carbohydrate degradation; glycolysis; pyruvate from D-glyceraldehyde 3-phosphate: step 4/5. Catalyzes the reversible conversion of 2-phosphoglycerate (2-PG) into phosphoenolpyruvate (PEP). It is essential for the degradation of carbohydrates via glycolysis. In Parasynechococcus marenigrum (strain WH8102), this protein is Enolase.